The sequence spans 199 residues: Protein GrpE (199 aa).

Over residues 1-17 (MSDSDNNTKSQQNNPTQ) the composition is skewed to polar residues. Residues 1–36 (MSDSDNNTKSQQNNPTQTDEKSGEEIQSNQKPQRKF) form a disordered region.

This sequence belongs to the GrpE family. As to quaternary structure, homodimer.

The protein resides in the cytoplasm. Functionally, participates actively in the response to hyperosmotic and heat shock by preventing the aggregation of stress-denatured proteins, in association with DnaK and GrpE. It is the nucleotide exchange factor for DnaK and may function as a thermosensor. Unfolded proteins bind initially to DnaJ; upon interaction with the DnaJ-bound protein, DnaK hydrolyzes its bound ATP, resulting in the formation of a stable complex. GrpE releases ADP from DnaK; ATP binding to DnaK triggers the release of the substrate protein, thus completing the reaction cycle. Several rounds of ATP-dependent interactions between DnaJ, DnaK and GrpE are required for fully efficient folding. The polypeptide is Protein GrpE (Ehrlichia canis (strain Jake)).